Consider the following 199-residue polypeptide: Thymidine kinase (199 aa).

ATP is bound by residues 9–16 and 93–96; these read GAMSSGKS and DEAQ. Glu-94 functions as the Proton acceptor in the catalytic mechanism. Cys-151, Cys-154, Cys-188, and His-191 together coordinate Zn(2+).

This sequence belongs to the thymidine kinase family. In terms of assembly, homotetramer.

The protein localises to the cytoplasm. The catalysed reaction is thymidine + ATP = dTMP + ADP + H(+). In Lactobacillus johnsonii (strain CNCM I-12250 / La1 / NCC 533), this protein is Thymidine kinase.